The chain runs to 215 residues: DNA polymerase III subunit epsilon (215 aa).

Asp19 and Glu21 together coordinate a divalent metal cation. 4 residues coordinate substrate: Asp19, Glu21, Asp62, and Asn67. His160 functions as the Proton acceptor in the catalytic mechanism. A divalent metal cation is bound at residue Asp165. Asp165 provides a ligand contact to substrate.

In terms of assembly, DNA polymerase III contains a core (composed of alpha, epsilon and theta chains) that associates with a tau subunit. This core dimerizes to form the POLIII' complex. PolIII' associates with the gamma complex (composed of gamma, delta, delta', psi and chi chains) and with the beta chain to form the complete DNA polymerase III complex. Mg(2+) serves as cofactor. The cofactor is Mn(2+).

It carries out the reaction DNA(n) + a 2'-deoxyribonucleoside 5'-triphosphate = DNA(n+1) + diphosphate. In terms of biological role, DNA polymerase III is a complex, multichain enzyme responsible for most of the replicative synthesis in bacteria. The epsilon subunit contain the editing function and is a proofreading 3'-5' exonuclease. The chain is DNA polymerase III subunit epsilon (dnaQ) from Treponema pallidum (strain Nichols).